An 811-amino-acid polypeptide reads, in one-letter code: Elongation factor G, mitochondrial (811 aa).

The N-terminal 64 residues, 1–64 (MSAIARAAAR…FQQSFQRRWA (64 aa)), are a transit peptide targeting the mitochondrion. The 299-residue stretch at 96–394 (RRQRNVGISA…GVCAYLPNPS (299 aa)) folds into the tr-type G domain. Residues 105 to 112 (AHIDSGKT), 192 to 196 (DTPGH), and 246 to 249 (NKMD) each bind GTP.

Belongs to the TRAFAC class translation factor GTPase superfamily. Classic translation factor GTPase family. EF-G/EF-2 subfamily.

The protein resides in the mitochondrion. Its pathway is protein biosynthesis; polypeptide chain elongation. Its function is as follows. Mitochondrial GTPase that catalyzes the GTP-dependent ribosomal translocation step during translation elongation. During this step, the ribosome changes from the pre-translocational (PRE) to the post-translocational (POST) state as the newly formed A-site-bound peptidyl-tRNA and P-site-bound deacylated tRNA move to the P and E sites, respectively. Catalyzes the coordinated movement of the two tRNA molecules, the mRNA and conformational changes in the ribosome. In Cryptococcus neoformans var. neoformans serotype D (strain JEC21 / ATCC MYA-565) (Filobasidiella neoformans), this protein is Elongation factor G, mitochondrial.